The following is a 615-amino-acid chain: 1-deoxy-D-xylulose-5-phosphate synthase (615 aa).

Thiamine diphosphate is bound by residues histidine 76 and 117–119; that span reads GHS. Residue aspartate 148 participates in Mg(2+) binding. Residues 149–150, asparagine 177, tyrosine 284, and glutamate 365 each bind thiamine diphosphate; that span reads GA. Asparagine 177 is a binding site for Mg(2+).

It belongs to the transketolase family. DXPS subfamily. In terms of assembly, homodimer. The cofactor is Mg(2+). It depends on thiamine diphosphate as a cofactor.

The catalysed reaction is D-glyceraldehyde 3-phosphate + pyruvate + H(+) = 1-deoxy-D-xylulose 5-phosphate + CO2. It functions in the pathway metabolic intermediate biosynthesis; 1-deoxy-D-xylulose 5-phosphate biosynthesis; 1-deoxy-D-xylulose 5-phosphate from D-glyceraldehyde 3-phosphate and pyruvate: step 1/1. In terms of biological role, catalyzes the acyloin condensation reaction between C atoms 2 and 3 of pyruvate and glyceraldehyde 3-phosphate to yield 1-deoxy-D-xylulose-5-phosphate (DXP). This chain is 1-deoxy-D-xylulose-5-phosphate synthase, found in Francisella tularensis subsp. tularensis (strain FSC 198).